Reading from the N-terminus, the 449-residue chain is Tubulin alpha-1C chain (449 aa).

Positions 1-4 (MREC) match the MREC motif motif. Position 11 (glutamine 11) interacts with GTP. Position 40 is an N6-acetyllysine (lysine 40). Residues glutamate 71, serine 140, glycine 144, threonine 145, threonine 179, asparagine 206, and asparagine 228 each contribute to the GTP site. Glutamate 71 contacts Mg(2+). Glutamate 254 is an active-site residue. Tyrosine 282 bears the 3'-nitrotyrosine mark. The tract at residues 429–449 (EKDYEEVGADSAEGDDEGDEY) is disordered. The segment covering 431-449 (DYEEVGADSAEGDDEGDEY) has biased composition (acidic residues). Position 432 is a phosphotyrosine (tyrosine 432). The residue at position 439 (serine 439) is a Phosphoserine. 3'-nitrotyrosine is present on tyrosine 449.

This sequence belongs to the tubulin family. Dimer of alpha and beta chains. A typical microtubule is a hollow water-filled tube with an outer diameter of 25 nm and an inner diameter of 15 nM. Alpha-beta heterodimers associate head-to-tail to form protofilaments running lengthwise along the microtubule wall with the beta-tubulin subunit facing the microtubule plus end conferring a structural polarity. Microtubules usually have 13 protofilaments but different protofilament numbers can be found in some organisms and specialized cells. Mg(2+) serves as cofactor. Post-translationally, some glutamate residues at the C-terminus are polyglycylated, resulting in polyglycine chains on the gamma-carboxyl group. Glycylation is mainly limited to tubulin incorporated into axonemes (cilia and flagella) whereas glutamylation is prevalent in neuronal cells, centrioles, axonemes, and the mitotic spindle. Both modifications can coexist on the same protein on adjacent residues, and lowering polyglycylation levels increases polyglutamylation, and reciprocally. Cilia and flagella glycylation is required for their stability and maintenance. Flagella glycylation controls sperm motility. In terms of processing, some glutamate residues at the C-terminus are polyglutamylated, resulting in polyglutamate chains on the gamma-carboxyl group. Polyglutamylation plays a key role in microtubule severing by spastin (SPAST). SPAST preferentially recognizes and acts on microtubules decorated with short polyglutamate tails: severing activity by SPAST increases as the number of glutamates per tubulin rises from one to eight, but decreases beyond this glutamylation threshold. Glutamylation is also involved in cilia motility. Acetylation of alpha chains at Lys-40 is located inside the microtubule lumen. This modification has been correlated with increased microtubule stability, intracellular transport and ciliary assembly. Post-translationally, methylation of alpha chains at Lys-40 is found in mitotic microtubules and is required for normal mitosis and cytokinesis contributing to genomic stability. In terms of processing, nitration of Tyr-449 is irreversible and interferes with normal dynein intracellular distribution. Undergoes a tyrosination/detyrosination cycle, the cyclic removal and re-addition of a C-terminal tyrosine residue by the enzymes tubulin tyrosine carboxypeptidase (MATCAP1, VASH1 or VASH2) and tubulin tyrosine ligase (TTL), respectively. Post-translationally, tyrosination promotes microtubule interaction with CAP-Gly domain-containing proteins such as CLIP1, CLIP2 and DCTN1. Tyrosination regulates the initiation of dynein-dynactin motility via interaction with DCTN1, which brings the dynein-dynactin complex into contact with microtubules. In neurons, tyrosinated tubulins mediate the initiation of retrograde vesicle transport. In terms of processing, detyrosination is involved in metaphase plate congression by guiding chromosomes during mitosis: detyrosination promotes interaction with CENPE, promoting pole-proximal transport of chromosomes toward the equator. Detyrosination increases microtubules-dependent mechanotransduction in dystrophic cardiac and skeletal muscle. In cardiomyocytes, detyrosinated microtubules are required to resist to contractile compression during contraction: detyrosination promotes association with desmin (DES) at force-generating sarcomeres, leading to buckled microtubules and mechanical resistance to contraction.

The protein localises to the cytoplasm. It localises to the cytoskeleton. It carries out the reaction GTP + H2O = GDP + phosphate + H(+). Tubulin is the major constituent of microtubules, a cylinder consisting of laterally associated linear protofilaments composed of alpha- and beta-tubulin heterodimers. Microtubules grow by the addition of GTP-tubulin dimers to the microtubule end, where a stabilizing cap forms. Below the cap, tubulin dimers are in GDP-bound state, owing to GTPase activity of alpha-tubulin. This chain is Tubulin alpha-1C chain (TUBA1C), found in Bos taurus (Bovine).